The primary structure comprises 274 residues: Shikimate dehydrogenase (NADP(+)) (274 aa).

Residues 14–16 and Thr-61 each bind shikimate; that span reads SQS. The active-site Proton acceptor is Lys-65. Asn-86 and Asp-102 together coordinate shikimate. NADP(+) contacts are provided by residues 128-132, 151-156, and Leu-215; these read GAGGA and NRTVEK. Position 217 (Tyr-217) interacts with shikimate. Gly-239 provides a ligand contact to NADP(+).

It belongs to the shikimate dehydrogenase family. Homodimer.

The enzyme catalyses shikimate + NADP(+) = 3-dehydroshikimate + NADPH + H(+). Its pathway is metabolic intermediate biosynthesis; chorismate biosynthesis; chorismate from D-erythrose 4-phosphate and phosphoenolpyruvate: step 4/7. Functionally, involved in the biosynthesis of the chorismate, which leads to the biosynthesis of aromatic amino acids. Catalyzes the reversible NADPH linked reduction of 3-dehydroshikimate (DHSA) to yield shikimate (SA). This Proteus mirabilis (strain HI4320) protein is Shikimate dehydrogenase (NADP(+)).